We begin with the raw amino-acid sequence, 268 residues long: Phosphatidylglycerol--prolipoprotein diacylglyceryl transferase (268 aa).

The next 7 membrane-spanning stretches (helical) occupy residues 23 to 43, 62 to 82, 97 to 117, 132 to 152, 179 to 199, 206 to 226, and 241 to 261; these read IGLR…RWLA, LLFN…VFFY, VWEG…AMIW, FVAP…FINL, SQLY…NIFI, ASVA…VEYV, and GQAL…WAYS. Arg145 provides a ligand contact to a 1,2-diacyl-sn-glycero-3-phospho-(1'-sn-glycerol).

Belongs to the Lgt family.

Its subcellular location is the cell inner membrane. The enzyme catalyses L-cysteinyl-[prolipoprotein] + a 1,2-diacyl-sn-glycero-3-phospho-(1'-sn-glycerol) = an S-1,2-diacyl-sn-glyceryl-L-cysteinyl-[prolipoprotein] + sn-glycerol 1-phosphate + H(+). The protein operates within protein modification; lipoprotein biosynthesis (diacylglyceryl transfer). In terms of biological role, catalyzes the transfer of the diacylglyceryl group from phosphatidylglycerol to the sulfhydryl group of the N-terminal cysteine of a prolipoprotein, the first step in the formation of mature lipoproteins. The chain is Phosphatidylglycerol--prolipoprotein diacylglyceryl transferase from Haemophilus influenzae (strain 86-028NP).